A 30-amino-acid polypeptide reads, in one-letter code: Nattererin-2 (30 aa).

Expressed by the skin glands.

It is found in the secreted. Its function is as follows. Probably has antibacterial activity. The polypeptide is Nattererin-2 (Physalaemus nattereri (Cuyaba dwarf frog)).